Consider the following 500-residue polypeptide: Protein ASPARTIC PROTEASE IN GUARD CELL 1 (500 aa).

A signal peptide spans 1-24; sequence MAFPRFLSLLAVVTLSLFLTTTDA. Positions 162-496 constitute a Peptidase A1 domain; it reads YFSRIGVGTP…DLSKNVIGLS (335 aa). D180 is an active-site residue. 6 disulfide bridges follow: C190/C193, C196/C271, C217/C235, C222/C230, C307/C500, and C419/C461. D379 is an active-site residue.

The protein belongs to the peptidase A1 family. As to expression, expressed in young seedlings, leaves, guard-cells, stems, flowers and siliques, but not in roots or mesophyll cells.

It localises to the endoplasmic reticulum. With respect to regulation, inhibited by pepstatin A. Its function is as follows. Aspartic protease involved in drought avoidance through abscisic acid signaling. The protein is Protein ASPARTIC PROTEASE IN GUARD CELL 1 (ASPG1) of Arabidopsis thaliana (Mouse-ear cress).